The following is a 346-amino-acid chain: Aspartate-semialdehyde dehydrogenase (346 aa).

NADP(+) is bound by residues 12-15 and 40-41; these read SGAV and RS. Arg101 contributes to the phosphate binding site. The Acyl-thioester intermediate role is filled by Cys131. Gln158 contributes to the substrate binding site. NADP(+) is bound at residue 161–162; sequence SG. Lys225 serves as a coordination point for phosphate. Residue Arg246 participates in substrate binding. Residue His253 is the Proton acceptor of the active site. Gln326 provides a ligand contact to NADP(+).

This sequence belongs to the aspartate-semialdehyde dehydrogenase family. As to quaternary structure, homodimer.

The enzyme catalyses L-aspartate 4-semialdehyde + phosphate + NADP(+) = 4-phospho-L-aspartate + NADPH + H(+). It functions in the pathway amino-acid biosynthesis; L-lysine biosynthesis via DAP pathway; (S)-tetrahydrodipicolinate from L-aspartate: step 2/4. Its pathway is amino-acid biosynthesis; L-methionine biosynthesis via de novo pathway; L-homoserine from L-aspartate: step 2/3. It participates in amino-acid biosynthesis; L-threonine biosynthesis; L-threonine from L-aspartate: step 2/5. Catalyzes the NADPH-dependent formation of L-aspartate-semialdehyde (L-ASA) by the reductive dephosphorylation of L-aspartyl-4-phosphate. This Helicobacter pylori (strain ATCC 700392 / 26695) (Campylobacter pylori) protein is Aspartate-semialdehyde dehydrogenase.